The chain runs to 510 residues: ATP synthase subunit alpha (510 aa).

170–177 serves as a coordination point for ATP; the sequence is GDRQTGKT.

Belongs to the ATPase alpha/beta chains family. As to quaternary structure, F-type ATPases have 2 components, CF(1) - the catalytic core - and CF(0) - the membrane proton channel. CF(1) has five subunits: alpha(3), beta(3), gamma(1), delta(1), epsilon(1). CF(0) has three main subunits: a(1), b(2) and c(9-12). The alpha and beta chains form an alternating ring which encloses part of the gamma chain. CF(1) is attached to CF(0) by a central stalk formed by the gamma and epsilon chains, while a peripheral stalk is formed by the delta and b chains.

The protein resides in the cell inner membrane. The catalysed reaction is ATP + H2O + 4 H(+)(in) = ADP + phosphate + 5 H(+)(out). Produces ATP from ADP in the presence of a proton gradient across the membrane. The alpha chain is a regulatory subunit. This is ATP synthase subunit alpha from Acidiphilium cryptum (strain JF-5).